The primary structure comprises 139 residues: Large ribosomal subunit protein uL16 (139 aa).

It belongs to the universal ribosomal protein uL16 family. As to quaternary structure, part of the 50S ribosomal subunit.

Binds 23S rRNA and is also seen to make contacts with the A and possibly P site tRNAs. This is Large ribosomal subunit protein uL16 from Mycoplasma pneumoniae (strain ATCC 29342 / M129 / Subtype 1) (Mycoplasmoides pneumoniae).